Reading from the N-terminus, the 121-residue chain is UPF0102 protein XF_0554 (121 aa).

Belongs to the UPF0102 family.

The chain is UPF0102 protein XF_0554 from Xylella fastidiosa (strain 9a5c).